The chain runs to 93 residues: Alpha-defensin 5 (93 aa).

An N-terminal signal peptide occupies residues 1–19 (MKTFVLLSALVLLAFQVQA). A propeptide spanning residues 20-58 (DPIHKTDEETNTEEQPGEEDQAVSISFGGQEGSALHEEL) is cleaved from the precursor. 3 disulfide bridges follow: Cys64-Cys92, Cys66-Cys81, and Cys71-Cys91.

It belongs to the alpha-defensin family.

The protein resides in the secreted. In terms of biological role, probably contributes to the antimicrobial barrier function of the small bowel mucosa. The chain is Alpha-defensin 5 (Defa5) from Mus musculus (Mouse).